A 775-amino-acid chain; its full sequence is DNA polymerase (775 aa).

The protein belongs to the DNA polymerase type-B family.

The enzyme catalyses DNA(n) + a 2'-deoxyribonucleoside 5'-triphosphate = DNA(n+1) + diphosphate. This chain is DNA polymerase (pol), found in Thermococcus sp. (strain 9oN-7).